We begin with the raw amino-acid sequence, 211 residues long: Probable superoxide dismutase [Mn], mitochondrial (211 aa).

Residues His36, His84, Asp173, and His177 each coordinate Mn(2+).

Belongs to the iron/manganese superoxide dismutase family. In terms of assembly, homotetramer. Requires Mn(2+) as cofactor.

It is found in the mitochondrion matrix. It carries out the reaction 2 superoxide + 2 H(+) = H2O2 + O2. Its function is as follows. Destroys superoxide anion radicals which are normally produced within the cells and which are toxic to biological systems. The polypeptide is Probable superoxide dismutase [Mn], mitochondrial (Debaryomyces hansenii (strain ATCC 36239 / CBS 767 / BCRC 21394 / JCM 1990 / NBRC 0083 / IGC 2968) (Yeast)).